We begin with the raw amino-acid sequence, 379 residues long: UDP-4-amino-4-deoxy-L-arabinose--oxoglutarate aminotransferase (379 aa).

Lys-182 carries the post-translational modification N6-(pyridoxal phosphate)lysine.

It belongs to the DegT/DnrJ/EryC1 family. ArnB subfamily. As to quaternary structure, homodimer. The cofactor is pyridoxal 5'-phosphate.

It catalyses the reaction UDP-4-amino-4-deoxy-beta-L-arabinose + 2-oxoglutarate = UDP-beta-L-threo-pentopyranos-4-ulose + L-glutamate. The protein operates within nucleotide-sugar biosynthesis; UDP-4-deoxy-4-formamido-beta-L-arabinose biosynthesis; UDP-4-deoxy-4-formamido-beta-L-arabinose from UDP-alpha-D-glucuronate: step 2/3. Its pathway is bacterial outer membrane biogenesis; lipopolysaccharide biosynthesis. In terms of biological role, catalyzes the conversion of UDP-4-keto-arabinose (UDP-Ara4O) to UDP-4-amino-4-deoxy-L-arabinose (UDP-L-Ara4N). The modified arabinose is attached to lipid A and is required for resistance to polymyxin and cationic antimicrobial peptides. The protein is UDP-4-amino-4-deoxy-L-arabinose--oxoglutarate aminotransferase of Salmonella paratyphi A (strain ATCC 9150 / SARB42).